Consider the following 159-residue polypeptide: RNA pyrophosphohydrolase (159 aa).

The Nudix hydrolase domain maps to glycine 6–lysine 149. Positions glycine 38–glycine 59 match the Nudix box motif.

Belongs to the Nudix hydrolase family. RppH subfamily. It depends on a divalent metal cation as a cofactor.

In terms of biological role, accelerates the degradation of transcripts by removing pyrophosphate from the 5'-end of triphosphorylated RNA, leading to a more labile monophosphorylated state that can stimulate subsequent ribonuclease cleavage. This is RNA pyrophosphohydrolase from Stutzerimonas stutzeri (strain A1501) (Pseudomonas stutzeri).